A 360-amino-acid polypeptide reads, in one-letter code: tRNA (guanine-N(7)-)-methyltransferase (360 aa).

The segment at 1 to 32 (MTPPPPKRQKRDEYRKATAEAASQPGPSDVAE) is disordered. S-adenosyl-L-methionine-binding positions include Gly99 and 122 to 123 (EI). The segment at 177-196 (ADAASPVLSTDTEHTPTTLV) is disordered. Residues 183–196 (VLSTDTEHTPTTLV) are compositionally biased toward polar residues. S-adenosyl-L-methionine contacts are provided by residues 209 to 210 (NT) and Cys229. Residue Asp232 is part of the active site. 332-334 (TEE) is an S-adenosyl-L-methionine binding site.

Belongs to the class I-like SAM-binding methyltransferase superfamily. TrmB family. As to quaternary structure, forms a complex with trm82.

The protein resides in the nucleus. It catalyses the reaction guanosine(46) in tRNA + S-adenosyl-L-methionine = N(7)-methylguanosine(46) in tRNA + S-adenosyl-L-homocysteine. It participates in tRNA modification; N(7)-methylguanine-tRNA biosynthesis. Its function is as follows. Catalyzes the formation of N(7)-methylguanine at position 46 (m7G46) in tRNA. In Neosartorya fischeri (strain ATCC 1020 / DSM 3700 / CBS 544.65 / FGSC A1164 / JCM 1740 / NRRL 181 / WB 181) (Aspergillus fischerianus), this protein is tRNA (guanine-N(7)-)-methyltransferase (trm8).